The primary structure comprises 717 residues: uncharacterized protein (717 aa).

The protein belongs to the asfivirus C717R family.

Its subcellular location is the virion. This is an uncharacterized protein from African swine fever virus (strain Badajoz 1971 Vero-adapted) (Ba71V).